Consider the following 383-residue polypeptide: Succinate--CoA ligase [ADP-forming] subunit beta (383 aa).

The ATP-grasp domain maps to 9–241; sequence KEVLHKFNVS…YDEEVKEEIE (233 aa). ATP contacts are provided by residues lysine 46, 53–55, glutamate 99, serine 102, and glutamate 107; that span reads GRG. Mg(2+) is bound by residues asparagine 196 and aspartate 210. Residues asparagine 261 and 318–320 contribute to the substrate site; that span reads GIM.

This sequence belongs to the succinate/malate CoA ligase beta subunit family. Heterotetramer of two alpha and two beta subunits. Mg(2+) serves as cofactor.

It catalyses the reaction succinate + ATP + CoA = succinyl-CoA + ADP + phosphate. The catalysed reaction is GTP + succinate + CoA = succinyl-CoA + GDP + phosphate. It functions in the pathway carbohydrate metabolism; tricarboxylic acid cycle; succinate from succinyl-CoA (ligase route): step 1/1. In terms of biological role, succinyl-CoA synthetase functions in the citric acid cycle (TCA), coupling the hydrolysis of succinyl-CoA to the synthesis of either ATP or GTP and thus represents the only step of substrate-level phosphorylation in the TCA. The beta subunit provides nucleotide specificity of the enzyme and binds the substrate succinate, while the binding sites for coenzyme A and phosphate are found in the alpha subunit. The chain is Succinate--CoA ligase [ADP-forming] subunit beta from Wolbachia sp. subsp. Drosophila simulans (strain wRi).